A 492-amino-acid chain; its full sequence is Solute carrier family 2, facilitated glucose transporter member 1 (492 aa).

Residue methionine 1 is modified to N-acetylmethionine. The Cytoplasmic segment spans residues 1–11 (MEPSSKKLTGR). The chain crosses the membrane as a helical span at residues 12–33 (LMLAVGGAVLGSLQFGYNTGVI). Over 34-66 (NAPQKVIEEFYNQTWVHRYGESILPTTLTTLWS) the chain is Extracellular. Asparagine 45 carries N-linked (GlcNAc...) asparagine glycosylation. The helical transmembrane segment at 67-87 (LSVAIFSVGGMIGSFSVGLFV) threads the bilayer. The Cytoplasmic portion of the chain corresponds to 88-90 (NRF). Residues 91 to 112 (GRRNSMLMMNLLAFVSAVLMGF) form a helical membrane-spanning segment. Residues 113–120 (SKLGKSFE) lie on the Extracellular side of the membrane. A helical membrane pass occupies residues 121–144 (MLILGRFIIGVYCGLTTGFVPMYV). Threonine 137 serves as a coordination point for cytochalasin B. Over 145-155 (GEVSPTALRGA) the chain is Cytoplasmic. A helical membrane pass occupies residues 156–176 (LGTLHQLGIVVGILIAQVFGL). Residues 177–185 (DSIMGNKDL) are Extracellular-facing. The helical transmembrane segment at 186 to 206 (WPLLLSIIFIPALLQCIVLPF) threads the bilayer. Residues 207–271 (CPESPRFLLI…LFRSPAYRQP (65 aa)) are Cytoplasmic-facing. Position 226 is a phosphoserine; by PKC/PRKCB (serine 226). Residues 272–293 (ILIAVVLQLSQQLSGINAVFYY) traverse the membrane as a helical segment. Glutamine 282 contacts cytochalasin B. Residues 282–283 (QQ) and asparagine 288 contribute to the D-glucose site. Topologically, residues 294 to 306 (STSIFEKAGVQQP) are extracellular. Residues 307-328 (VYATIGSGIVNTAFTVVSLFVV) traverse the membrane as a helical segment. Asparagine 317 is a binding site for D-glucose. At 329 to 334 (ERAGRR) the chain is on the cytoplasmic side. The helical transmembrane segment at 335–355 (TLHLIGLAGMAGCAILMTIAL) threads the bilayer. Residues 356–365 (ALLEQLPWMS) are Extracellular-facing. Residues 366 to 388 (YLSIVAIFGFVAFFEVGPGPIPW) form a helical membrane-spanning segment. Glutamate 380 provides a ligand contact to D-glucose. Tryptophan 388 is a binding site for cytochalasin B. At 389-401 (FIVAELFSQGPRP) the chain is on the cytoplasmic side. The chain crosses the membrane as a helical span at residues 402 to 422 (AAIAVAGFSNWTSNFIVGMCF). Asparagine 411 serves as a coordination point for cytochalasin B. Over 423 to 429 (QYVEQLC) the chain is Extracellular. The chain crosses the membrane as a helical span at residues 430 to 450 (GPYVFIIFTVLLVLFFIFTYF). Residues 451–492 (KVPETKGRTFDEIASGFRQGGASQSDKTPEELFHPLGADSQV) are Cytoplasmic-facing. The residue at position 465 (serine 465) is a Phosphoserine. Positions 468-492 (RQGGASQSDKTPEELFHPLGADSQV) are disordered. The residue at position 478 (threonine 478) is a Phosphothreonine. Position 490 is a phosphoserine (serine 490).

It belongs to the major facilitator superfamily. Sugar transporter (TC 2.A.1.1) family. Glucose transporter subfamily. Interacts with GIPC (via PDZ domain). Found in a complex with ADD2, DMTN and SLC2A1. Interacts (via C-terminus cytoplasmic region) with DMTN isoform 2. Interacts with SNX27; the interaction is required when endocytosed to prevent degradation in lysosomes and promote recycling to the plasma membrane. Interacts with STOM. Interacts with SGTA (via Gln-rich region). Interacts with isoform 1 of BSG. Post-translationally, phosphorylation at Ser-226 by PKC promotes glucose uptake by increasing cell membrane localization. Detected in erythrocytes (at protein level). Expressed at variable levels in many human tissues.

Its subcellular location is the cell membrane. It is found in the melanosome. The protein resides in the photoreceptor inner segment. The enzyme catalyses D-glucose(out) = D-glucose(in). It participates in carbohydrate degradation. The uptake of glucose is inhibited by cytochalasin B and Phe-amide core-scaffold inhibitors GLUT-i1 and GLUT-i2. These inhibitors bind in the central cavity of the inward-open state and overlap the glucose-binding site. Glucose uptake is increased in response to phorbol ester 12-O-tetradecanoylphorbol-13-acetate (TPA) treatment: TPA-induced glucose uptake requires phosphorylation at Ser-226. Interacts with SMIM43; the interaction may promote SLC2A1-mediated glucose transport to meet the energy needs of mesendoderm differentiation. In terms of biological role, facilitative glucose transporter, which is responsible for constitutive or basal glucose uptake. Has a very broad substrate specificity; can transport a wide range of aldoses including both pentoses and hexoses. Most important energy carrier of the brain: present at the blood-brain barrier and assures the energy-independent, facilitative transport of glucose into the brain. In association with BSG and NXNL1, promotes retinal cone survival by increasing glucose uptake into photoreceptors. Required for mesendoderm differentiation. The chain is Solute carrier family 2, facilitated glucose transporter member 1 from Homo sapiens (Human).